The sequence spans 100 residues: Large ribosomal subunit protein uL23 (100 aa).

It belongs to the universal ribosomal protein uL23 family. Part of the 50S ribosomal subunit. Contacts protein L29, and trigger factor when it is bound to the ribosome.

In terms of biological role, one of the early assembly proteins it binds 23S rRNA. One of the proteins that surrounds the polypeptide exit tunnel on the outside of the ribosome. Forms the main docking site for trigger factor binding to the ribosome. This chain is Large ribosomal subunit protein uL23, found in Vibrio cholerae serotype O1 (strain ATCC 39541 / Classical Ogawa 395 / O395).